A 492-amino-acid polypeptide reads, in one-letter code: NADH-quinone oxidoreductase subunit N (492 aa).

14 helical membrane-spanning segments follow: residues 16–36 (LLIP…VGVF), 44–64 (LYIT…FLEG), 81–101 (ISLL…LFFM), 111–131 (GAEF…MASS), 134–154 (LILI…LIAL), 168–188 (FIMG…LYAA), 210–230 (ILVF…VTLV), 244–264 (NALL…AVII), 276–296 (AFVE…PNLI), 306–326 (MLAY…LINT), 332–352 (VIFF…GILW), 382–402 (LAIL…FCVF), 423–443 (IMAI…IYIF), and 463–483 (FALS…QNLL).

It belongs to the complex I subunit 2 family. In terms of assembly, NDH-1 is composed of 14 different subunits. Subunits NuoA, H, J, K, L, M, N constitute the membrane sector of the complex.

It localises to the cell inner membrane. The catalysed reaction is a quinone + NADH + 5 H(+)(in) = a quinol + NAD(+) + 4 H(+)(out). In terms of biological role, NDH-1 shuttles electrons from NADH, via FMN and iron-sulfur (Fe-S) centers, to quinones in the respiratory chain. The immediate electron acceptor for the enzyme in this species is believed to be ubiquinone. Couples the redox reaction to proton translocation (for every two electrons transferred, four hydrogen ions are translocated across the cytoplasmic membrane), and thus conserves the redox energy in a proton gradient. This is NADH-quinone oxidoreductase subunit N from Helicobacter hepaticus (strain ATCC 51449 / 3B1).